Reading from the N-terminus, the 84-residue chain is Toxin Acra3 (84 aa).

The signal sequence occupies residues 1–17 (MKIIFLVLMMILSEVYS). The region spanning 19–82 (RDGYPVHDGT…VYGDDGIFCK (64 aa)) is the LCN-type CS-alpha/beta domain. Intrachain disulfides connect Cys30–Cys81, Cys34–Cys57, Cys43–Cys62, and Cys47–Cys64. Serine amide is present on Ser83.

It belongs to the long (4 C-C) scorpion toxin superfamily. Sodium channel inhibitor family. Beta subfamily. In terms of tissue distribution, expressed by the venom gland.

It localises to the secreted. In terms of biological role, toxin with unknown target. In vivo, induces severe neurotoxic events in mice such as excitability and convulsions, leading to the death of the animals within a few minutes after injection. Exerts very strong cytotoxic effect on a mouse brain tumor cell line (BC3H1) (IC(50)=5 mg/ml). It exerts its effects by inducing a stronger necrosis than apoptosis in BC3H1 cells. The protein is Toxin Acra3 of Androctonus crassicauda (Arabian fat-tailed scorpion).